A 523-amino-acid chain; its full sequence is GMP synthase [glutamine-hydrolyzing] (523 aa).

The 198-residue stretch at 8–205 (KILILDFGSQ…VVKICGCERN (198 aa)) folds into the Glutamine amidotransferase type-1 domain. The active-site Nucleophile is Cys85. Active-site residues include His179 and Glu181. One can recognise a GMPS ATP-PPase domain in the interval 206–398 (WTPENIIEDA…LGLPAEMLNR (193 aa)). 233 to 239 (SGGVDSS) contributes to the ATP binding site.

Homodimer.

The enzyme catalyses XMP + L-glutamine + ATP + H2O = GMP + L-glutamate + AMP + diphosphate + 2 H(+). Its pathway is purine metabolism; GMP biosynthesis; GMP from XMP (L-Gln route): step 1/1. In terms of biological role, catalyzes the synthesis of GMP from XMP. This Pasteurella multocida (strain Pm70) protein is GMP synthase [glutamine-hydrolyzing].